Reading from the N-terminus, the 394-residue chain is 4-hydroxyphenylpyruvate dioxygenase (394 aa).

VOC domains follow at residues 27 to 161 (GYDH…LIER) and 193 to 351 (HIDH…LFTK). Fe cation contacts are provided by His196, His279, and Glu362.

Belongs to the 4HPPD family. It depends on Fe cation as a cofactor.

The catalysed reaction is 3-(4-hydroxyphenyl)pyruvate + O2 = homogentisate + CO2. It participates in amino-acid degradation; L-phenylalanine degradation; acetoacetate and fumarate from L-phenylalanine: step 3/6. The sequence is that of 4-hydroxyphenylpyruvate dioxygenase from Yarrowia lipolytica (strain CLIB 122 / E 150) (Yeast).